The sequence spans 177 residues: Large ribosomal subunit protein uL6 (177 aa).

The protein belongs to the universal ribosomal protein uL6 family. In terms of assembly, part of the 50S ribosomal subunit.

In terms of biological role, this protein binds to the 23S rRNA, and is important in its secondary structure. It is located near the subunit interface in the base of the L7/L12 stalk, and near the tRNA binding site of the peptidyltransferase center. This Variovorax paradoxus (strain S110) protein is Large ribosomal subunit protein uL6.